The following is a 74-amino-acid chain: Translation initiation factor IF-1 2 (74 aa).

The S1-like domain maps to 1–73 (MTKNKNVIEV…TRGRIVFRYR (73 aa)).

The protein belongs to the IF-1 family. Component of the 30S ribosomal translation pre-initiation complex which assembles on the 30S ribosome in the order IF-2 and IF-3, IF-1 and N-formylmethionyl-tRNA(fMet); mRNA recruitment can occur at any time during PIC assembly.

The protein resides in the cytoplasm. One of the essential components for the initiation of protein synthesis. Stabilizes the binding of IF-2 and IF-3 on the 30S subunit to which N-formylmethionyl-tRNA(fMet) subsequently binds. Helps modulate mRNA selection, yielding the 30S pre-initiation complex (PIC). Upon addition of the 50S ribosomal subunit IF-1, IF-2 and IF-3 are released leaving the mature 70S translation initiation complex. This is Translation initiation factor IF-1 2 from Streptomyces avermitilis (strain ATCC 31267 / DSM 46492 / JCM 5070 / NBRC 14893 / NCIMB 12804 / NRRL 8165 / MA-4680).